Consider the following 371-residue polypeptide: Putative agmatine deiminase (371 aa).

Cysteine 361 serves as the catalytic Amidino-cysteine intermediate.

It belongs to the agmatine deiminase family.

It carries out the reaction agmatine + H2O = N-carbamoylputrescine + NH4(+). The chain is Putative agmatine deiminase from Selenomonas ruminantium.